The primary structure comprises 256 residues: Ribonuclease HII (256 aa).

Residues 72–256 (QYIAGMDEVG…SFNPVPKYLN (185 aa)) form the RNase H type-2 domain. A divalent metal cation is bound by residues D78, E79, and D170.

It belongs to the RNase HII family. Requires Mn(2+) as cofactor. The cofactor is Mg(2+).

The protein localises to the cytoplasm. The catalysed reaction is Endonucleolytic cleavage to 5'-phosphomonoester.. Functionally, endonuclease that specifically degrades the RNA of RNA-DNA hybrids. The polypeptide is Ribonuclease HII (Limosilactobacillus reuteri (strain DSM 20016) (Lactobacillus reuteri)).